The following is a 381-amino-acid chain: Dynactin subunit 2 (381 aa).

The tract at residues 15–39 (DQPDVYETPDAPESETSDFYDEEPA) is disordered. Over residues 24–39 (DAPESETSDFYDEEPA) the composition is skewed to acidic residues. 2 coiled-coil regions span residues 100-216 (QKCL…AVGA) and 350-381 (GVQE…EKVK).

This sequence belongs to the dynactin subunit 2 family. As to quaternary structure, subunit of dynactin, a multiprotein complex associated with dynein.

The protein localises to the cytoplasm. It localises to the cytoskeleton. Its subcellular location is the membrane. Functionally, modulates cytoplasmic dynein binding to an organelle, and plays a role in prometaphase chromosome alignment and spindle organization during mitosis. This Aedes aegypti (Yellowfever mosquito) protein is Dynactin subunit 2.